We begin with the raw amino-acid sequence, 463 residues long: Hydroxyacid-oxoacid transhydrogenase, mitochondrial (463 aa).

This sequence belongs to the iron-containing alcohol dehydrogenase family. Hydroxyacid-oxoacid transhydrogenase subfamily.

It localises to the mitochondrion. The enzyme catalyses (S)-3-hydroxybutanoate + 2-oxoglutarate = (R)-2-hydroxyglutarate + acetoacetate. The catalysed reaction is 4-hydroxybutanoate + 2-oxoglutarate = (R)-2-hydroxyglutarate + succinate semialdehyde. Catalyzes the cofactor-independent reversible oxidation of gamma-hydroxybutyrate (GHB) to succinic semialdehyde (SSA) coupled to reduction of 2-ketoglutarate (2-KG) to D-2-hydroxyglutarate (D-2-HG). L-3-hydroxybutyrate (L-3-OHB) is also a substrate for HOT when using 2-KG as hydrogen acceptor, resulting in the formation of D-2-HG. This chain is Hydroxyacid-oxoacid transhydrogenase, mitochondrial (adhfe1), found in Xenopus laevis (African clawed frog).